The sequence spans 153 residues: 3-dehydroquinate dehydratase (153 aa).

Catalysis depends on Y26, which acts as the Proton acceptor. 3 residues coordinate substrate: N77, H83, and D90. H103 functions as the Proton donor in the catalytic mechanism. Residues 104–105 and R114 each bind substrate; that span reads LS.

The protein belongs to the type-II 3-dehydroquinase family. As to quaternary structure, homododecamer.

It catalyses the reaction 3-dehydroquinate = 3-dehydroshikimate + H2O. It participates in metabolic intermediate biosynthesis; chorismate biosynthesis; chorismate from D-erythrose 4-phosphate and phosphoenolpyruvate: step 3/7. Its function is as follows. Catalyzes a trans-dehydration via an enolate intermediate. The sequence is that of 3-dehydroquinate dehydratase from Colwellia psychrerythraea (strain 34H / ATCC BAA-681) (Vibrio psychroerythus).